We begin with the raw amino-acid sequence, 78 residues long: APHSIANGFKNLLALAATTDVDSKEAETIKEYIKDPSKIAAAAAATAPAAETKKEEKKEEKKEETEESDDDIGLSLFH.

Low complexity predominate over residues 40 to 50 (AAAAAATAPAA). A disordered region spans residues 40-78 (AAAAAATAPAAETKKEEKKEEKKEETEESDDDIGLSLFH). Residues 51 to 64 (ETKKEEKKEEKKEE) are compositionally biased toward basic and acidic residues.

Belongs to the universal ribosomal protein uL10 family. In terms of assembly, P0 forms a pentameric complex by interaction with dimers of P1 and P2.

The protein localises to the nucleus. It localises to the cytoplasm. Ribosomal protein P0 is the functional equivalent of E.coli protein L10. This chain is Large ribosomal subunit protein uL10, found in Culicoides nubeculosus (Biting midge).